The following is a 119-amino-acid chain: Beta-2-microglobulin (119 aa).

Positions 1–20 (MVCSVVVALLALLSLSGLEA) are cleaved as a signal peptide. Residues 25–114 (PKIQVYSRHP…VTFSTPKTVK (90 aa)) form the Ig-like C1-type domain. C45 and C100 are oxidised to a cystine.

It belongs to the beta-2-microglobulin family. Heterodimer of an alpha chain and a beta chain. Beta-2-microglobulin is the beta-chain of major histocompatibility complex class I molecules.

The protein resides in the secreted. Its function is as follows. Component of the class I major histocompatibility complex (MHC). Involved in the presentation of peptide antigens to the immune system. In Cebuella pygmaea (Pygmy marmoset), this protein is Beta-2-microglobulin (B2M).